Here is a 307-residue protein sequence, read N- to C-terminus: Transcription initiation factor IIB (307 aa).

2 consecutive repeat copies span residues asparagine 123–leucine 206 and aspartate 217–glutamine 298.

Belongs to the TFIIB family.

Its function is as follows. Stabilizes TBP binding to an archaeal box-A promoter. Also responsible for recruiting RNA polymerase II to the pre-initiation complex (DNA-TBP-TFIIB). The chain is Transcription initiation factor IIB from Sulfolobus acidocaldarius (strain ATCC 33909 / DSM 639 / JCM 8929 / NBRC 15157 / NCIMB 11770).